Consider the following 533-residue polypeptide: Probable polyamine oxidase 5 (533 aa).

The FAD site is built by Glu37, Arg45, Val262, and Glu501.

This sequence belongs to the flavin monoamine oxidase family. FAD is required as a cofactor. Expressed in root vasculature, leaves and stems.

It is found in the cytoplasm. The enzyme catalyses spermine + O2 + H2O = 3-aminopropanal + spermidine + H2O2. It carries out the reaction N(1)-acetylspermine + O2 + H2O = 3-acetamidopropanal + spermidine + H2O2. The catalysed reaction is norspermine + O2 + H2O = norspermidine + 3-aminopropanal + H2O2. It catalyses the reaction thermospermine + O2 + H2O = 3-aminopropanal + spermidine + H2O2. The protein operates within amine and polyamine degradation; spermine degradation. In terms of biological role, flavoenzyme involved in polyamine back-conversion. Catalyzes the oxidation of the secondary amino group of polyamines, such as spermine and its acetyl derivatives. Substrate preference is spermine &gt; N(1)-acetylspermine &gt; thermospermine &gt; norspermine. Plays an important role in the regulation of polyamine intracellular concentration. Involved in xylem differentiation by controlling thermospermine homeostasis, and participating in the tightly controlled interplay between auxin and cytokinin that is necessary for proper xylem differentiation. Involved in the production of hydrogen peroxide in response to salt and cold stresses. The protein is Probable polyamine oxidase 5 of Arabidopsis thaliana (Mouse-ear cress).